The following is a 55-amino-acid chain: Large ribosomal subunit protein bL33 (55 aa).

It belongs to the bacterial ribosomal protein bL33 family.

This is Large ribosomal subunit protein bL33 from Granulibacter bethesdensis (strain ATCC BAA-1260 / CGDNIH1).